A 412-amino-acid chain; its full sequence is Proline-rich protein 30 (412 aa).

Residues 33-45 (HNLQPLSAHQSLR) show a composition bias toward polar residues. Disordered regions lie at residues 33–75 (HNLQ…QFGS), 123–174 (PLTP…SNRQ), and 318–412 (PKEV…KSSV). 2 stretches are compositionally biased toward low complexity: residues 126–142 (PSFS…PHSP) and 334–350 (PSPA…ADPA). Residues 353–372 (TPSQTRSFRSAGLQSPNSPR) show a composition bias toward polar residues.

The chain is Proline-rich protein 30 (PRR30) from Macaca fascicularis (Crab-eating macaque).